Here is a 180-residue protein sequence, read N- to C-terminus: NADH-quinone oxidoreductase subunit I (180 aa).

4Fe-4S ferredoxin-type domains follow at residues L50–A80 and E90–D119. Positions 60, 63, 66, 70, 99, 102, 105, and 109 each coordinate [4Fe-4S] cluster.

The protein belongs to the complex I 23 kDa subunit family. As to quaternary structure, NDH-1 is composed of 13 different subunits. Subunits NuoA, H, J, K, L, M, N constitute the membrane sector of the complex. The cofactor is [4Fe-4S] cluster.

The protein resides in the cell inner membrane. The catalysed reaction is a quinone + NADH + 5 H(+)(in) = a quinol + NAD(+) + 4 H(+)(out). NDH-1 shuttles electrons from NADH, via FMN and iron-sulfur (Fe-S) centers, to quinones in the respiratory chain. The immediate electron acceptor for the enzyme in this species is believed to be ubiquinone. Couples the redox reaction to proton translocation (for every two electrons transferred, four hydrogen ions are translocated across the cytoplasmic membrane), and thus conserves the redox energy in a proton gradient. In Yersinia enterocolitica serotype O:8 / biotype 1B (strain NCTC 13174 / 8081), this protein is NADH-quinone oxidoreductase subunit I.